Here is a 393-residue protein sequence, read N- to C-terminus: S-adenosylmethionine synthase 1 (393 aa).

Residue Glu9 participates in Mg(2+) binding. ATP is bound at residue His15. Glu43 is a K(+) binding site. Glu56 and Gln99 together coordinate L-methionine. ATP-binding positions include 167–169 (DGK), 235–238 (SGRF), Asp246, 252–253 (RK), Ala269, Lys273, and Lys277. Residue Asp246 coordinates L-methionine. L-methionine is bound at residue Lys277.

It belongs to the AdoMet synthase family. As to quaternary structure, homotetramer. The cofactor is Mn(2+). Mg(2+) is required as a cofactor. It depends on Co(2+) as a cofactor. Requires K(+) as cofactor.

The protein localises to the cytoplasm. It carries out the reaction L-methionine + ATP + H2O = S-adenosyl-L-methionine + phosphate + diphosphate. It functions in the pathway amino-acid biosynthesis; S-adenosyl-L-methionine biosynthesis; S-adenosyl-L-methionine from L-methionine: step 1/1. Its function is as follows. Catalyzes the formation of S-adenosylmethionine from methionine and ATP. The reaction comprises two steps that are both catalyzed by the same enzyme: formation of S-adenosylmethionine (AdoMet) and triphosphate, and subsequent hydrolysis of the triphosphate. This chain is S-adenosylmethionine synthase 1 (SAMS1), found in Brassica juncea (Indian mustard).